Consider the following 555-residue polypeptide: O-fucosyltransferase 20 (555 aa).

Topologically, residues 1–58 are cytoplasmic; sequence MALPKNGGNSSSTKKKVSYISVPSQIINSLSSSSLQSLLVSPKKSSRCTNRFSYRNPR. The helical; Signal-anchor for type II membrane protein transmembrane segment at 59–79 threads the bilayer; the sequence is IWFLTLFLVSLFGMLKLGLNV. The Lumenal portion of the chain corresponds to 80–555; it reads DPISLPFSRY…MCSDRRQQQQ (476 aa). The interval 110 to 130 is disordered; it reads KNDTQSSSSSEHRKNETLPTE. 2 N-linked (GlcNAc...) asparagine glycosylation sites follow: asparagine 111 and asparagine 124. 330 to 332 is a binding site for substrate; the sequence is HLR. Residues asparagine 371 and asparagine 503 are each glycosylated (N-linked (GlcNAc...) asparagine). A disordered region spans residues 525-555; sequence QPELRTGRGGKDVTKHPVSECMCSDRRQQQQ. A compositionally biased stretch (basic and acidic residues) spans 529 to 555; that stretch reads RTGRGGKDVTKHPVSECMCSDRRQQQQ.

The protein belongs to the glycosyltransferase GT106 family. As to expression, highly expressed in embryogenic microspore and in vegetative tissues.

It is found in the golgi apparatus membrane. The protein operates within glycan metabolism. In terms of biological role, may play a role in the biosynthesis of matrix polysaccharides and contribute to the biomechanics and development of the plant cell wall. This is O-fucosyltransferase 20 from Brassica napus (Rape).